Reading from the N-terminus, the 1368-residue chain is DNA-directed RNA polymerase subunit beta (1368 aa).

Belongs to the RNA polymerase beta chain family. The RNAP catalytic core consists of 2 alpha, 1 beta, 1 beta' and 1 omega subunit. When a sigma factor is associated with the core the holoenzyme is formed, which can initiate transcription.

The catalysed reaction is RNA(n) + a ribonucleoside 5'-triphosphate = RNA(n+1) + diphosphate. In terms of biological role, DNA-dependent RNA polymerase catalyzes the transcription of DNA into RNA using the four ribonucleoside triphosphates as substrates. The chain is DNA-directed RNA polymerase subunit beta from Burkholderia multivorans (strain ATCC 17616 / 249).